A 549-amino-acid chain; its full sequence is Probable protein kinase UbiB (549 aa).

The Protein kinase domain occupies 123 to 504; that stretch reads DFDETALASA…QRNNTGFSRL (382 aa). ATP is bound by residues 129-137 and Lys-156; that span reads LASASIAQV. Asp-291 functions as the Proton acceptor in the catalytic mechanism. A helical transmembrane segment spans residues 505 to 525; that stretch reads MILGIAIAGTFWKFEMLPLWV.

This sequence belongs to the ABC1 family. UbiB subfamily.

The protein localises to the cell inner membrane. The protein operates within cofactor biosynthesis; ubiquinone biosynthesis [regulation]. Its function is as follows. Is probably a protein kinase regulator of UbiI activity which is involved in aerobic coenzyme Q (ubiquinone) biosynthesis. The sequence is that of Probable protein kinase UbiB from Glaesserella parasuis serovar 5 (strain SH0165) (Haemophilus parasuis).